The sequence spans 558 residues: Dihydroxy-acid dehydratase (558 aa).

Asp81 is a binding site for Mg(2+). Cys122 contacts [2Fe-2S] cluster. Mg(2+)-binding residues include Asp123 and Lys124. Position 124 is an N6-carboxylysine (Lys124). Position 195 (Cys195) interacts with [2Fe-2S] cluster. Position 447 (Glu447) interacts with Mg(2+). Catalysis depends on Ser473, which acts as the Proton acceptor.

The protein belongs to the IlvD/Edd family. As to quaternary structure, homodimer. It depends on [2Fe-2S] cluster as a cofactor. The cofactor is Mg(2+).

It catalyses the reaction (2R)-2,3-dihydroxy-3-methylbutanoate = 3-methyl-2-oxobutanoate + H2O. The catalysed reaction is (2R,3R)-2,3-dihydroxy-3-methylpentanoate = (S)-3-methyl-2-oxopentanoate + H2O. It participates in amino-acid biosynthesis; L-isoleucine biosynthesis; L-isoleucine from 2-oxobutanoate: step 3/4. It functions in the pathway amino-acid biosynthesis; L-valine biosynthesis; L-valine from pyruvate: step 3/4. Its function is as follows. Functions in the biosynthesis of branched-chain amino acids. Catalyzes the dehydration of (2R,3R)-2,3-dihydroxy-3-methylpentanoate (2,3-dihydroxy-3-methylvalerate) into 2-oxo-3-methylpentanoate (2-oxo-3-methylvalerate) and of (2R)-2,3-dihydroxy-3-methylbutanoate (2,3-dihydroxyisovalerate) into 2-oxo-3-methylbutanoate (2-oxoisovalerate), the penultimate precursor to L-isoleucine and L-valine, respectively. The chain is Dihydroxy-acid dehydratase from Bacillus subtilis (strain 168).